Consider the following 254-residue polypeptide: Triosephosphate isomerase (254 aa).

Residue 10 to 12 coordinates substrate; sequence NWK. Catalysis depends on histidine 99, which acts as the Electrophile. Residue glutamate 169 is the Proton acceptor of the active site. Residues glycine 175, serine 215, and 236 to 237 each bind substrate; that span reads GG.

It belongs to the triosephosphate isomerase family. Homodimer.

It is found in the cytoplasm. The enzyme catalyses D-glyceraldehyde 3-phosphate = dihydroxyacetone phosphate. Its pathway is carbohydrate biosynthesis; gluconeogenesis. It functions in the pathway carbohydrate degradation; glycolysis; D-glyceraldehyde 3-phosphate from glycerone phosphate: step 1/1. Functionally, involved in the gluconeogenesis. Catalyzes stereospecifically the conversion of dihydroxyacetone phosphate (DHAP) to D-glyceraldehyde-3-phosphate (G3P). The polypeptide is Triosephosphate isomerase (Chlamydia felis (strain Fe/C-56) (Chlamydophila felis)).